The following is a 636-amino-acid chain: Chaperone protein DnaK2 (636 aa).

Residue threonine 198 is modified to Phosphothreonine; by autocatalysis. Residues glutamate 604 to threonine 618 show a composition bias toward low complexity. Positions glutamate 604–lysine 636 are disordered. Positions aspartate 625–lysine 636 are enriched in acidic residues.

This sequence belongs to the heat shock protein 70 family.

Acts as a chaperone. The protein is Chaperone protein DnaK2 (dnaK2) of Synechocystis sp. (strain ATCC 27184 / PCC 6803 / Kazusa).